The chain runs to 490 residues: ATP synthase subunit beta, chloroplastic (490 aa).

T6 carries the post-translational modification Phosphothreonine. S13 carries the phosphoserine modification. 172-179 (GGAGVGKT) serves as a coordination point for ATP.

This sequence belongs to the ATPase alpha/beta chains family. F-type ATPases have 2 components, CF(1) - the catalytic core - and CF(0) - the membrane proton channel. CF(1) has five subunits: alpha(3), beta(3), gamma(1), delta(1), epsilon(1). CF(0) has four main subunits: a(1), b(1), b'(1) and c(9-12).

It is found in the plastid. The protein resides in the chloroplast thylakoid membrane. It catalyses the reaction ATP + H2O + 4 H(+)(in) = ADP + phosphate + 5 H(+)(out). Its function is as follows. Produces ATP from ADP in the presence of a proton gradient across the membrane. The catalytic sites are hosted primarily by the beta subunits. The sequence is that of ATP synthase subunit beta, chloroplastic from Aethionema cordifolium (Lebanon stonecress).